A 396-amino-acid polypeptide reads, in one-letter code: Flavohemoprotein (396 aa).

The Globin domain maps to 1–136; it reads MLDTQTIAIV…LADVFIQRES (136 aa). A heme b-binding site is contributed by histidine 85. Residues tyrosine 95 and glutamate 135 each act as charge relay system in the active site. Residues 147–396 form a reductase region; sequence GGWRTLRRFR…YECFGPHKVI (250 aa). An FAD-binding FR-type domain is found at 150-255; that stretch reads RTLRRFRIIK…APPRGDFFLD (106 aa). FAD contacts are provided by residues tyrosine 188 and 204–207; that span reads RQYS. Residue 268-273 coordinates NADP(+); it reads GVGQTP. Position 389–392 (389–392) interacts with FAD; sequence CFGP.

The protein belongs to the globin family. Two-domain flavohemoproteins subfamily. In the C-terminal section; belongs to the flavoprotein pyridine nucleotide cytochrome reductase family. It depends on heme b as a cofactor. The cofactor is FAD.

The enzyme catalyses 2 nitric oxide + NADPH + 2 O2 = 2 nitrate + NADP(+) + H(+). It catalyses the reaction 2 nitric oxide + NADH + 2 O2 = 2 nitrate + NAD(+) + H(+). Is involved in NO detoxification in an aerobic process, termed nitric oxide dioxygenase (NOD) reaction that utilizes O(2) and NAD(P)H to convert NO to nitrate, which protects the bacterium from various noxious nitrogen compounds. Therefore, plays a central role in the inducible response to nitrosative stress. This Yersinia pestis protein is Flavohemoprotein.